The sequence spans 302 residues: Methionyl-tRNA formyltransferase (302 aa).

108-111 (SLLP) serves as a coordination point for (6S)-5,6,7,8-tetrahydrofolate.

This sequence belongs to the Fmt family.

The enzyme catalyses L-methionyl-tRNA(fMet) + (6R)-10-formyltetrahydrofolate = N-formyl-L-methionyl-tRNA(fMet) + (6S)-5,6,7,8-tetrahydrofolate + H(+). Functionally, attaches a formyl group to the free amino group of methionyl-tRNA(fMet). The formyl group appears to play a dual role in the initiator identity of N-formylmethionyl-tRNA by promoting its recognition by IF2 and preventing the misappropriation of this tRNA by the elongation apparatus. This is Methionyl-tRNA formyltransferase from Cereibacter sphaeroides (strain ATCC 17025 / ATH 2.4.3) (Rhodobacter sphaeroides).